A 300-amino-acid chain; its full sequence is Regulatory protein NocR (300 aa).

An HTH lysR-type domain is found at 1-59 (MIQSRQLEAFRAVMLTGGMTSAANLVRITQPAISRLIRDLEEEIGISLFERTGNRLRPT). Residues 19–38 (MTSAANLVRITQPAISRLIR) constitute a DNA-binding region (H-T-H motif).

Belongs to the LysR transcriptional regulatory family.

In terms of biological role, positive regulatory protein for the noc operon involved in nopaline catabolism and uptake. The protein is Regulatory protein NocR (nocR) of Agrobacterium fabrum (strain C58 / ATCC 33970) (Agrobacterium tumefaciens (strain C58)).